The following is a 111-amino-acid chain: Cytochrome c oxidase subunit 7A2-like, mitochondrial (111 aa).

A mitochondrion-targeting transit peptide spans Met-1–Ser-54. Lys-68 bears the N6-acetyllysine mark. A helical transmembrane segment spans residues Pro-79 to Met-104.

The protein belongs to the cytochrome c oxidase VIIa family.

The protein localises to the mitochondrion inner membrane. Non-functional protein. In contrast to the protein found in other strains (AC Q99KD6), cannot induce the assembly of mitochondrial respiratory supercomplexes. In Mus musculus (Mouse), this protein is Cytochrome c oxidase subunit 7A2-like, mitochondrial.